We begin with the raw amino-acid sequence, 473 residues long: Catalase easC (473 aa).

Low complexity predominate over residues 1–15 (MASEVSVASSGSEHS). The tract at residues 1–31 (MASEVSVASSGSEHSGAQKCPFQDPGLSSMD) is disordered. His-54 is a catalytic residue. Tyr-344 is a binding site for heme. The segment at 369–388 (DGARPEKAEMAPQKVPSQEH) is disordered.

This sequence belongs to the catalase family. It depends on heme as a cofactor.

It participates in alkaloid biosynthesis; ergot alkaloid biosynthesis. In terms of biological role, catalase; part of the gene cluster that mediates the biosynthesis of fungal ergot alkaloid. DmaW catalyzes the first step of ergot alkaloid biosynthesis by condensing dimethylallyl diphosphate (DMAP) and tryptophan to form 4-dimethylallyl-L-tryptophan. The second step is catalyzed by the methyltransferase easF that methylates 4-dimethylallyl-L-tryptophan in the presence of S-adenosyl-L-methionine, resulting in the formation of 4-dimethylallyl-L-abrine. The catalase easC and the FAD-dependent oxidoreductase easE then transform 4-dimethylallyl-L-abrine to chanoclavine-I which is further oxidized by easD in the presence of NAD(+), resulting in the formation of chanoclavine-I aldehyde. Agroclavine dehydrogenase easG then mediates the conversion of chanoclavine-I aldehyde to agroclavine via a non-enzymatic adduct reaction: the substrate is an iminium intermediate that is formed spontaneously from chanoclavine-I aldehyde in the presence of glutathione. The presence of easA is not required to complete this reaction. Further conversion of agroclavine to paspalic acid is a two-step process involving oxidation of agroclavine to elymoclavine and of elymoclavine to paspalic acid, the second step being performed by the elymoclavine oxidase cloA. Paspalic acid is then further converted to D-lysergic acid. Ergopeptines are assembled from D-lysergic acid and three different amino acids by the D-lysergyl-peptide-synthetases composed each of a monomudular and a trimodular nonribosomal peptide synthetase subunit. LpsB and lpsC encode the monomodular subunits responsible for D-lysergic acid activation and incorporation into the ergopeptine backbone. LpsA1 and A2 subunits encode the trimodular nonribosomal peptide synthetase assembling the tripeptide portion of ergopeptines. LpsA1 is responsible for formation of the major ergopeptine, ergotamine, and lpsA2 for alpha-ergocryptine, the minor ergopeptine of the total alkaloid mixture elaborated by C.purpurea. D-lysergyl-tripeptides are assembled by the nonribosomal peptide synthetases and released as N-(D-lysergyl-aminoacyl)-lactams. Cyclolization of the D-lysergyl-tripeptides is performed by the Fe(2+)/2-ketoglutarate-dependent dioxygenase easH which introduces a hydroxyl group into N-(D-lysergyl-aminoacyl)-lactam at alpha-C of the aminoacyl residue followed by spontaneous condensation with the terminal lactam carbonyl group. This chain is Catalase easC, found in Claviceps purpurea (Ergot fungus).